The primary structure comprises 378 residues: Mating-type protein MAT-1 (378 aa).

The segment at residues 60-117 (KARKALNAFVGFRCYYITIPMFKPWPMKKLSNLIGLLWEADPNKSLWSLMAKPWSTIR) is a DNA-binding region (alpha box).

This sequence belongs to the MATALPHA1 family.

The protein localises to the nucleus. Its function is as follows. Mating type proteins are sequence specific DNA-binding proteins that act as master switches in fungal differentiation by controlling gene expression in a cell type-specific fashion. Transcriptional activator that induces the transcription of alpha-specific genes. This chain is Mating-type protein MAT-1 (MAT1), found in Cochliobolus sativus (Common root rot and spot blotch fungus).